The primary structure comprises 322 residues: Putative UDP-N-acetylglucosamine--dolichyl-phosphate N-acetylglucosaminephosphotransferase (322 aa).

9 helical membrane passes run Ala-5–Ile-25, Ile-46–Leu-66, Ile-76–Phe-96, Val-102–Ser-122, Ile-123–Ile-143, Leu-160–Leu-180, Thr-186–Phe-206, Phe-222–Ile-242, and Tyr-295–Leu-315.

Belongs to the glycosyltransferase 4 family.

It localises to the cell membrane. The enzyme catalyses a di-trans,poly-cis-dolichyl phosphate + UDP-N-acetyl-alpha-D-glucosamine = an N-acetyl-alpha-D-glucosaminyl-diphospho-di-trans,poly-cis-dolichol + UMP. Inhibited by tunicamycin. The polypeptide is Putative UDP-N-acetylglucosamine--dolichyl-phosphate N-acetylglucosaminephosphotransferase (gnpTA) (Saccharolobus solfataricus (strain ATCC 35092 / DSM 1617 / JCM 11322 / P2) (Sulfolobus solfataricus)).